We begin with the raw amino-acid sequence, 329 residues long: MVHAKSWTLKKHFVGYPTNSDFELKTVELPPLKDGEVLLEALYLTVDPYMRIMAKSLKEGDMMMGEQVARVVESKNSAFPTGTIVLAPSGWTTHSISNGEKLEKVLAEWPDTLPLSLALGTVGMPGLTAYFGLLDICGVKGGETVLVSAAAGAVGSIVGQIAKLKGCKVVGTAGSDEKVAWLKKHGFDVALNYKTVKSLEEALKEAAPEGYDCYFDNVGGEFSNVAITQMKKFGRIAICGAISVYNRTSPLSPGPSPEIIIFKELHLQGFVVYRWQGEVRQKALRDLLKWVSEGKIQYHEHVTEGFENMPAAFIGLLKGENLGKAIVKA.

T18 carries the post-translational modification Phosphothreonine. Residue S20 is modified to Phosphoserine. NADP(+) contacts are provided by residues 152–155, K178, Y193, N217, 239–245, 270–272, and N321; these read GAVG, CGAISVY, and FVV. K178 is subject to N6-(2-hydroxyisobutyryl)lysine; alternate. K178 is subject to N6-acetyllysine; alternate.

The protein belongs to the NADP-dependent oxidoreductase L4BD family. Monomer or homodimer.

It localises to the cytoplasm. It catalyses the reaction 13,14-dihydro-15-oxo-prostaglandin E1 + NADP(+) = 15-oxoprostaglandin E1 + NADPH + H(+). The enzyme catalyses 13,14-dihydro-15-oxo-prostaglandin E2 + NADP(+) = 15-oxoprostaglandin E2 + NADPH + H(+). The catalysed reaction is 13,14-dihydro-15-oxo-prostaglandin F1alpha + NADP(+) = 15-oxoprostaglandin F1alpha + NADPH + H(+). It carries out the reaction 13,14-dihydro-15-oxo-PGF2alpha + NADP(+) = 15-oxoprostaglandin F2alpha + NADPH + H(+). It catalyses the reaction leukotriene B4 + NADP(+) = 12-oxo-leukotriene B4 + NADPH + H(+). The enzyme catalyses 20-hydroxy-leukotriene B4 + NADP(+) = 12-oxo-20-hydroxy-leukotriene B4 + NADPH + H(+). The catalysed reaction is 6-trans-leukotriene B4 + NADP(+) = 12-oxo-(5S)-hydroxy-(6E,8E,10E,14Z)-eicosatetraenoate + NADPH + H(+). It carries out the reaction (5S,12S)-dihydroxy-(6E,10E,12E,14Z)-eicosatetraenoate + NADP(+) = 12-oxo-(5S)-hydroxy-(6E,8E,10E,14Z)-eicosatetraenoate + NADPH + H(+). It catalyses the reaction an n-alkanal + NADP(+) = an alk-2-enal + NADPH + H(+). The enzyme catalyses hexanal + NADP(+) = (E)-hex-2-enal + NADPH + H(+). The catalysed reaction is octanal + NADP(+) = (2E)-octenal + NADPH + H(+). It carries out the reaction decanal + NADP(+) = (2E)-decenal + NADPH + H(+). It catalyses the reaction dodecanal + NADP(+) = (2E)-dodecenal + NADPH + H(+). The enzyme catalyses 4-hydroxynonanal + NADP(+) = (E)-4-hydroxynon-2-enal + NADPH + H(+). The catalysed reaction is pentan-2-one + NADP(+) = (E)-pent-3-en-2-one + NADPH + H(+). It carries out the reaction nonan-2-one + NADP(+) = (3E)-nonen-2-one + NADPH + H(+). NAD(P)H-dependent oxidoreductase involved in metabolic inactivation of pro- and anti-inflammatory eicosanoids: prostaglandins (PG), leukotrienes (LT) and lipoxins (LX). Catalyzes with high efficiency the reduction of the 13,14 double bond of 15-oxoPGs, including 15-oxo-PGE1, 15-oxo-PGE2, 15-oxo-PGF1-alpha and 15-oxo-PGF2-alpha. Catalyzes with lower efficiency the oxidation of the hydroxyl group at C12 of LTB4 and its derivatives, converting them into biologically less active 12-oxo-LTB4 metabolites. Reduces 15-oxo-LXA4 to 13,14 dihydro-15-oxo-LXA4, enhancing neutrophil recruitment at the inflammatory site. Plays a role in metabolic detoxification of alkenals and ketones. Reduces alpha,beta-unsaturated alkenals and ketones, particularly those with medium-chain length, showing highest affinity toward (2E)-decenal and (3E)-3-nonen-2-one. May inactivate 4-hydroxy-2-nonenal, a cytotoxic lipid constituent of oxidized low-density lipoprotein particles. In Bos taurus (Bovine), this protein is Prostaglandin reductase 1 (PTGR1).